Consider the following 2184-residue polypeptide: Genome polyprotein (2184 aa).

A lipid anchor (N-myristoyl glycine; by host) is attached at G2. Topologically, residues 2-1494 (GAQVSTQKTG…HVSRAFICLQ (1493 aa)) are cytoplasmic. The segment at 566 to 582 (FYQSPVEGAIERAIARV) is amphipathic alpha-helix. Residues H871 and D889 each act as for protease 2A activity in the active site. Residues C906 and C908 each contribute to the Zn(2+) site. The For protease 2A activity role is filled by C960. Zn(2+) is bound by residues C966 and H968. Positions 1100-1172 (SNGWLKKFTE…EQSAPSQSDQ (73 aa)) are membrane-binding. The segment at 1100 to 1238 (SNGWLKKFTE…SPGAGKSVAT (139 aa)) is oligomerization. The segment at 1121-1125 (AIKIQ) is RNA-binding. The SF3 helicase domain occupies 1204-1360 (EKKMSNYIQF…SMYSQNGKIN (157 aa)). Positions 1368, 1380, and 1385 each coordinate Zn(2+). Residues 1368 to 1385 (CDEECCPVNFKKCCPLVC) form a C4-type; degenerate zinc finger. Residues 1412–1419 (EYNHRHSV) are RNA-binding. An oligomerization region spans residues 1423–1428 (LEALFQ). An intramembrane segment occupies 1495-1510 (ALTTFVSVAGIIYIIY). Residues 1511-2184 (KLFAGFQGAY…TLRRKWLDSF (674 aa)) are Cytoplasmic-facing. At Y1520 the chain carries O-(5'-phospho-RNA)-tyrosine. In terms of domain architecture, Peptidase C3 spans 1540–1718 (GPAFEFAVAM…FSAALLKHYF (179 aa)). Catalysis depends on for protease 3C activity residues H1579, E1610, and C1686. Residues 1949-2065 (GHLIAFDYSG…SYPWPIDASL (117 aa)) form the RdRp catalytic domain. 2 residues coordinate Mg(2+): D1955 and D2051.

Belongs to the picornaviruses polyprotein family. As to quaternary structure, interacts with capsid protein VP1 and capsid protein VP3 to form heterotrimeric protomers. Interacts with capsid protein VP0, and capsid protein VP3 to form heterotrimeric protomers. Five protomers subsequently associate to form pentamers which serve as building blocks for the capsid. Interacts with capsid protein VP2, capsid protein VP3 and capsid protein VP4 following cleavage of capsid protein VP0. Interacts with host CXADR. In terms of assembly, interacts with capsid protein VP1 and capsid protein VP3 in the mature capsid. As to quaternary structure, interacts with capsid protein VP0 and capsid protein VP1 to form heterotrimeric protomers. Five protomers subsequently associate to form pentamers which serve as building blocks for the capsid. Interacts with capsid protein VP4 in the mature capsid. Interacts with protein 2C; this interaction may be important for virion morphogenesis. Interacts with capsid protein VP1 and capsid protein VP3. In terms of assembly, homodimer. As to quaternary structure, homohexamer; forms a hexameric ring structure with 6-fold symmetry characteristic of AAA+ ATPases. Interacts (via N-terminus) with host RTN3 (via reticulon domain); this interaction is important for viral replication. Interacts with capsid protein VP3; this interaction may be important for virion morphogenesis. Interacts with protein 3CD. In terms of assembly, homodimer. Interacts with host GBF1. Interacts (via GOLD domain) with host ACBD3 (via GOLD domain); this interaction allows the formation of a viral protein 3A/ACBD3 heterotetramer with a 2:2 stoichiometry, which will stimulate the recruitment of host PI4KB in order to synthesize PI4P at the viral RNA replication sites. As to quaternary structure, interacts with RNA-directed RNA polymerase. Interacts with protein 3AB and with RNA-directed RNA polymerase. In terms of assembly, interacts with Viral protein genome-linked and with protein 3CD. Mg(2+) serves as cofactor. Specific enzymatic cleavages in vivo by the viral proteases yield processing intermediates and the mature proteins. Post-translationally, myristoylation is required for the formation of pentamers during virus assembly. Further assembly of 12 pentamers and a molecule of genomic RNA generates the provirion. In terms of processing, during virion maturation, immature virions are rendered infectious following cleavage of VP0 into VP4 and VP2. This maturation seems to be an autocatalytic event triggered by the presence of RNA in the capsid and it is followed by a conformational change infectious virion. Myristoylation is required during RNA encapsidation and formation of the mature virus particle. Post-translationally, VPg is uridylylated by the polymerase into VPg-pUpU. This acts as a nucleotide-peptide primer for the genomic RNA replication.

The protein localises to the virion. It is found in the host cytoplasm. It localises to the host cytoplasmic vesicle membrane. The protein resides in the host nucleus. It carries out the reaction a ribonucleoside 5'-triphosphate + H2O = a ribonucleoside 5'-diphosphate + phosphate + H(+). It catalyses the reaction Selective cleavage of Tyr-|-Gly bond in the picornavirus polyprotein.. The catalysed reaction is RNA(n) + a ribonucleoside 5'-triphosphate = RNA(n+1) + diphosphate. The enzyme catalyses Selective cleavage of Gln-|-Gly bond in the poliovirus polyprotein. In other picornavirus reactions Glu may be substituted for Gln, and Ser or Thr for Gly.. Replication or transcription is subject to high level of random mutations by the nucleotide analog ribavirin. Functionally, forms an icosahedral capsid of pseudo T=3 symmetry with capsid proteins VP2 and VP3. The capsid is 300 Angstroms in diameter, composed of 60 copies of each capsid protein and enclosing the viral positive strand RNA genome. Capsid protein VP1 mainly forms the vertices of the capsid. Capsid protein VP1 interacts with host CXADR to provide virion attachment to target host cells. This attachment induces virion internalization. Tyrosine kinases are probably involved in the entry process. After binding to its receptor, the capsid undergoes conformational changes. Capsid protein VP1 N-terminus (that contains an amphipathic alpha-helix) and capsid protein VP4 are externalized. Together, they shape a pore in the host membrane through which viral genome is translocated to host cell cytoplasm. Its function is as follows. Forms an icosahedral capsid of pseudo T=3 symmetry with capsid proteins VP2 and VP3. The capsid is 300 Angstroms in diameter, composed of 60 copies of each capsid protein and enclosing the viral positive strand RNA genome. In terms of biological role, lies on the inner surface of the capsid shell. After binding to the host receptor, the capsid undergoes conformational changes. Capsid protein VP4 is released, Capsid protein VP1 N-terminus is externalized, and together, they shape a pore in the host membrane through which the viral genome is translocated into the host cell cytoplasm. Component of immature procapsids, which is cleaved into capsid proteins VP4 and VP2 after maturation. Allows the capsid to remain inactive before the maturation step. Functionally, cysteine protease that cleaves viral polyprotein and specific host proteins. It is responsible for the autocatalytic cleavage between the P1 and P2 regions, which is the first cleavage occurring in the polyprotein. Also cleaves the host translation initiation factor EIF4G1, in order to shut down the capped cellular mRNA translation. Inhibits the host nucleus-cytoplasm protein and RNA trafficking by cleaving host members of the nuclear pores. Counteracts stress granule formation probably by antagonizing its assembly or promoting its dissassembly. Cleaves and inhibits host IFIH1/MDA5, thereby inhibiting the type-I IFN production and the establishment of the antiviral state. Cleaves and inhibits host MAVS, thereby inhibiting the type-I IFN production and the establishment of the antiviral state. Its function is as follows. Plays an essential role in the virus replication cycle by acting as a viroporin. Creates a pore in the host endoplasmic reticulum and as a consequence releases Ca2+ in the cytoplasm of infected cell. In turn, high levels of cytoplasmic calcium may trigger membrane trafficking and transport of viral ER-associated proteins to viroplasms, sites of viral genome replication. In terms of biological role, induces and associates with structural rearrangements of intracellular membranes. Displays RNA-binding, nucleotide binding and NTPase activities. May play a role in virion morphogenesis and viral RNA encapsidation by interacting with the capsid protein VP3. Localizes the viral replication complex to the surface of membranous vesicles. Together with protein 3CD binds the Cis-Active RNA Element (CRE) which is involved in RNA synthesis initiation. Acts as a cofactor to stimulate the activity of 3D polymerase, maybe through a nucleid acid chaperone activity. Functionally, localizes the viral replication complex to the surface of membranous vesicles. It inhibits host cell endoplasmic reticulum-to-Golgi apparatus transport and causes the disassembly of the Golgi complex, possibly through GBF1 interaction. This would result in depletion of MHC, trail receptors and IFN receptors at the host cell surface. Plays an essential role in viral RNA replication by recruiting ACBD3 and PI4KB at the viral replication sites, thereby allowing the formation of the rearranged membranous structures where viral replication takes place. Its function is as follows. Acts as a primer for viral RNA replication and remains covalently bound to viral genomic RNA. VPg is uridylylated prior to priming replication into VPg-pUpU. The oriI viral genomic sequence may act as a template for this. The VPg-pUpU is then used as primer on the genomic RNA poly(A) by the RNA-dependent RNA polymerase to replicate the viral genome. During genome replication, the VPg-RNA linkage is removed by the host TDP2, thereby accelerating replication. During the late stage of the replication cycle, host TDP2 is excluded from sites of viral RNA synthesis and encapsidation, allowing for the generation of progeny virions. In terms of biological role, involved in the viral replication complex and viral polypeptide maturation. It exhibits protease activity with a specificity and catalytic efficiency that is different from protease 3C. Protein 3CD lacks polymerase activity. Protein 3CD binds to the 5'UTR of the viral genome. Replicates the viral genomic RNA on the surface of intracellular membranes. May form linear arrays of subunits that propagate along a strong head-to-tail interaction called interface-I. Covalently attaches UMP to a tyrosine of VPg, which is used to prime RNA synthesis. The positive stranded RNA genome is first replicated at virus induced membranous vesicles, creating a dsRNA genomic replication form. This dsRNA is then used as template to synthesize positive stranded RNA genomes. ss(+)RNA genomes are either translated, replicated or encapsidated. Functionally, major viral protease that mediates proteolytic processing of the polyprotein. Cleaves host EIF5B, contributing to host translation shutoff. Also cleaves host PABPC1, contributing to host translation shutoff. Cleaves host NLRP1, triggers host N-glycine-mediated degradation of the autoinhibitory NLRP1 N-terminal fragment. This chain is Genome polyprotein, found in Coxsackievirus B6 (strain Schmitt).